Here is a 225-residue protein sequence, read N- to C-terminus: 2-C-methyl-D-erythritol 4-phosphate cytidylyltransferase (225 aa).

Belongs to the IspD/TarI cytidylyltransferase family. IspD subfamily.

The enzyme catalyses 2-C-methyl-D-erythritol 4-phosphate + CTP + H(+) = 4-CDP-2-C-methyl-D-erythritol + diphosphate. It participates in isoprenoid biosynthesis; isopentenyl diphosphate biosynthesis via DXP pathway; isopentenyl diphosphate from 1-deoxy-D-xylulose 5-phosphate: step 2/6. Functionally, catalyzes the formation of 4-diphosphocytidyl-2-C-methyl-D-erythritol from CTP and 2-C-methyl-D-erythritol 4-phosphate (MEP). The chain is 2-C-methyl-D-erythritol 4-phosphate cytidylyltransferase from Cereibacter sphaeroides (strain KD131 / KCTC 12085) (Rhodobacter sphaeroides).